Consider the following 245-residue polypeptide: Probable proteasome subunit alpha type-2 (245 aa).

It belongs to the peptidase T1A family. As to quaternary structure, the 26S proteasome consists of a 20S proteasome core and two 19S regulatory subunits. The 20S proteasome core is composed of 28 subunits that are arranged in four stacked rings, resulting in a barrel-shaped structure. The two end rings are each formed by seven alpha subunits, and the two central rings are each formed by seven beta subunits. The catalytic chamber with the active sites is on the inside of the barrel.

The protein localises to the cytoplasm. It localises to the nucleus. The proteasome is a multicatalytic proteinase complex which is characterized by its ability to cleave peptides with Arg, Phe, Tyr, Leu, and Glu adjacent to the leaving group at neutral or slightly basic pH. The proteasome has an ATP-dependent proteolytic activity. This chain is Probable proteasome subunit alpha type-2 (pre8), found in Schizosaccharomyces pombe (strain 972 / ATCC 24843) (Fission yeast).